Reading from the N-terminus, the 38-residue chain is Photosystem II reaction center protein L (38 aa).

Residues 17–37 (SLFWGLLLIFILAVLFSSYFF) form a helical membrane-spanning segment.

Belongs to the PsbL family. PSII is composed of 1 copy each of membrane proteins PsbA, PsbB, PsbC, PsbD, PsbE, PsbF, PsbH, PsbI, PsbJ, PsbK, PsbL, PsbM, PsbT, PsbX, PsbY, PsbZ, Psb30/Ycf12, at least 3 peripheral proteins of the oxygen-evolving complex and a large number of cofactors. It forms dimeric complexes.

It is found in the plastid. It localises to the chloroplast thylakoid membrane. In terms of biological role, one of the components of the core complex of photosystem II (PSII). PSII is a light-driven water:plastoquinone oxidoreductase that uses light energy to abstract electrons from H(2)O, generating O(2) and a proton gradient subsequently used for ATP formation. It consists of a core antenna complex that captures photons, and an electron transfer chain that converts photonic excitation into a charge separation. This subunit is found at the monomer-monomer interface and is required for correct PSII assembly and/or dimerization. This Guillardia theta (Cryptophyte) protein is Photosystem II reaction center protein L.